Consider the following 750-residue polypeptide: GTP pyrophosphokinase rsh (750 aa).

The region spanning 45-144 is the HD domain; the sequence is YFSHPLEVAA…VKLADRLHNM (100 aa). A TGS domain is found at 390–451; that stretch reads DQVFCFTPKG…KNGDEVDIIR (62 aa). The segment at 587–613 is disordered; the sequence is AAKVDPAATTPKPGKRALPIRGTNPDL. The ACT domain maps to 676 to 750; the sequence is RISVSAINSP…SVSSAKRVNG (75 aa).

This sequence belongs to the RelA/SpoT family.

The catalysed reaction is GTP + ATP = guanosine 3'-diphosphate 5'-triphosphate + AMP. Its function is as follows. Functions as a (p)ppGpp synthase. In eubacteria ppGpp (guanosine 3'-diphosphate 5'-diphosphate) is a mediator of the stringent response that coordinates a variety of cellular activities in response to changes in nutritional abundance. It is necessary for persistence in mice, essential for intracellular growth of Brucella and required for expression of the type IV secretion system VirB and therefore plays a role in adaptation of Brucella to its intracellular host environment. This is GTP pyrophosphokinase rsh (rsh) from Brucella suis biovar 1 (strain 1330).